The chain runs to 378 residues: Histidinol-phosphate aminotransferase (378 aa).

The segment at 1-20 (MSVSAKETQRHPARPEPRPG) is disordered. Positions 7 to 17 (ETQRHPARPEP) are enriched in basic and acidic residues. Lysine 232 is modified (N6-(pyridoxal phosphate)lysine).

Belongs to the class-II pyridoxal-phosphate-dependent aminotransferase family. Histidinol-phosphate aminotransferase subfamily. As to quaternary structure, homodimer. It depends on pyridoxal 5'-phosphate as a cofactor.

The catalysed reaction is L-histidinol phosphate + 2-oxoglutarate = 3-(imidazol-4-yl)-2-oxopropyl phosphate + L-glutamate. Its pathway is amino-acid biosynthesis; L-histidine biosynthesis; L-histidine from 5-phospho-alpha-D-ribose 1-diphosphate: step 7/9. The protein is Histidinol-phosphate aminotransferase of Azorhizobium caulinodans (strain ATCC 43989 / DSM 5975 / JCM 20966 / LMG 6465 / NBRC 14845 / NCIMB 13405 / ORS 571).